Here is a 329-residue protein sequence, read N- to C-terminus: MQGSVTEFLKPRLVDIEQVNSTRAKVTLEPLERGFGHTLGNALRRILLSSMPGCAVTEVEIDGVLHEYSSKEGVQEDILEILLNLKGLAVTIEGKDEAMLTLSKSGAGPVIAADITHDGDVTIVNPDHIICHLTGNNDISMRIRVERGRGYVPASARAQTEDDDRPIGRLLVDASFSPVARIAYNVEAARVEQRTDLDKLVIDMTTNGTIDPEEAIRRSATILAEQLDAFVELRDVTEPELKEEKPEFDPILLRPVDDLELTVRSANCLKAEAIHYIGDLVQRTEVELLKTPNLGKKSLTEIKDVLASRGLSLGMRLENWPPASLADDL.

The interval 1-234 is alpha N-terminal domain (alpha-NTD); sequence MQGSVTEFLK…EQLDAFVELR (234 aa). The segment at 248-329 is alpha C-terminal domain (alpha-CTD); it reads FDPILLRPVD…WPPASLADDL (82 aa).

The protein belongs to the RNA polymerase alpha chain family. As to quaternary structure, homodimer. The RNAP catalytic core consists of 2 alpha, 1 beta, 1 beta' and 1 omega subunit. When a sigma factor is associated with the core the holoenzyme is formed, which can initiate transcription.

It catalyses the reaction RNA(n) + a ribonucleoside 5'-triphosphate = RNA(n+1) + diphosphate. Functionally, DNA-dependent RNA polymerase catalyzes the transcription of DNA into RNA using the four ribonucleoside triphosphates as substrates. The sequence is that of DNA-directed RNA polymerase subunit alpha from Shewanella baltica (strain OS155 / ATCC BAA-1091).